We begin with the raw amino-acid sequence, 593 residues long: Probable metalloendopeptidase G1-type (593 aa).

Zn(2+) is bound at residue histidine 41. Residue glutamate 44 is part of the active site. Histidine 45 provides a ligand contact to Zn(2+).

It belongs to the peptidase M44 family. Zn(2+) serves as cofactor.

Its function is as follows. Seems to be involved in viral proteins maturation by cleavage at Ala-Gly-|-Xaa motifs. This Homo sapiens (Human) protein is Probable metalloendopeptidase G1-type.